We begin with the raw amino-acid sequence, 255 residues long: Ribosomal RNA small subunit methyltransferase A (255 aa).

Residues Asn-13, Leu-15, Gly-40, Glu-61, Asp-85, and Asn-103 each coordinate S-adenosyl-L-methionine.

This sequence belongs to the class I-like SAM-binding methyltransferase superfamily. rRNA adenine N(6)-methyltransferase family. RsmA subfamily.

The protein localises to the cytoplasm. The catalysed reaction is adenosine(1518)/adenosine(1519) in 16S rRNA + 4 S-adenosyl-L-methionine = N(6)-dimethyladenosine(1518)/N(6)-dimethyladenosine(1519) in 16S rRNA + 4 S-adenosyl-L-homocysteine + 4 H(+). Its function is as follows. Specifically dimethylates two adjacent adenosines (A1518 and A1519) in the loop of a conserved hairpin near the 3'-end of 16S rRNA in the 30S particle. May play a critical role in biogenesis of 30S subunits. The sequence is that of Ribosomal RNA small subunit methyltransferase A from Dechloromonas aromatica (strain RCB).